The sequence spans 262 residues: Nurim (262 aa).

Topologically, residues 1–4 (MAPA) are nuclear. Residues 5–28 (LLLVPAALASFILAFGTGVEFVRF) traverse the membrane as a helical segment. At 29 to 58 (TSLRPLLGGIPESGGPDARHGWLAALQDRS) the chain is on the perinuclear space side. The chain crosses the membrane as a helical span at residues 59–80 (ILASLAWDLCLLLLFVVQHSLM). The Nuclear segment spans residues 81–97 (ATEAVKAWTSRYFGVLQ). The helical transmembrane segment at 98–114 (RSLYVACTALALQLVMR) threads the bilayer. Over 115–133 (YWETTPRGPVLWEARAEPW) the chain is Perinuclear space. The helical transmembrane segment at 134–164 (ATWVPLLCFVLHVVSWLLIFSILLVFDYAEL) threads the bilayer. Topologically, residues 165 to 191 (MGLKQVYYHVLGLGEPLSLKSPRALRL) are nuclear. The helical transmembrane segment at 192–210 (FSHLRHPVCVELLTVLWVV) threads the bilayer. The Perinuclear space segment spans residues 211-216 (PTLGTD). A helical transmembrane segment spans residues 217 to 234 (RLLLALLFTLYLGLAHGL). Residues 235-262 (DQQDLRYLRSQLQRKLHLLSRPQDGEAE) lie on the Nuclear side of the membrane.

Belongs to the nurim family.

It is found in the nucleus inner membrane. In Mus musculus (Mouse), this protein is Nurim (Nrm).